A 982-amino-acid polypeptide reads, in one-letter code: Chromosome partition protein Smc (982 aa).

33–40 contributes to the ATP binding site; sequence PNGSGKSN. Coiled coils occupy residues 171–235 and 263–377; these read RYTK…LVAD and QLQL…NLNQ. The 120-residue stretch at 416-535 folds into the SMC hinge domain; the sequence is TGLLNTLNTF…ASDLQAALKL (120 aa). 3 coiled-coil regions span residues 568 to 627, 669 to 713, and 753 to 818; these read LSLY…ERVN, AERD…RSQL, and IKLS…EIDE.

The protein belongs to the SMC family. Homodimer.

Its subcellular location is the cytoplasm. Required for chromosome condensation and partitioning. This is Chromosome partition protein Smc from Mycoplasma pneumoniae (strain ATCC 29342 / M129 / Subtype 1) (Mycoplasmoides pneumoniae).